A 151-amino-acid chain; its full sequence is Putative membrane protein ORF10 (151 aa).

2 helical membrane passes run 7–23 (LCLA…GVVV) and 107–123 (GLVA…IIMY).

Its subcellular location is the membrane. The sequence is that of Putative membrane protein ORF10 (ORF10) from Ictalurid herpesvirus 1 (strain Auburn) (IcHV-1).